The following is a 110-amino-acid chain: Small ribosomal subunit protein bS16 (110 aa).

Residues 87 to 110 (ARNNPEKAVPRKERKAAAEAAAKK) form a disordered region.

This sequence belongs to the bacterial ribosomal protein bS16 family.

The chain is Small ribosomal subunit protein bS16 from Rhodopseudomonas palustris (strain BisA53).